The sequence spans 93 residues: Small ribosomal subunit protein uS19 (93 aa).

It belongs to the universal ribosomal protein uS19 family.

In terms of biological role, protein S19 forms a complex with S13 that binds strongly to the 16S ribosomal RNA. This Campylobacter hominis (strain ATCC BAA-381 / DSM 21671 / CCUG 45161 / LMG 19568 / NCTC 13146 / CH001A) protein is Small ribosomal subunit protein uS19.